The chain runs to 23 residues: Aurein-4.3 (23 aa).

This sequence belongs to the frog skin active peptide (FSAP) family. Aurein subfamily. Expressed by the skin dorsal glands.

The protein resides in the secreted. Functionally, has no antimicrobial or anticancer activity. In Ranoidea aurea (Green and golden bell frog), this protein is Aurein-4.3.